The chain runs to 300 residues: MTDSTATRCGYVAIVGRPNVGKSTLLNHILGQKLAITSRKPQTTRHNMLGIKTEGAIQAIYVDTPGMHKSNEKALNRYMNKTASAALKDVDVVIFVVDRTKWTDEDQLVLERVQYVQGPVILAINKTDRIEDKAELMPHLTWLQEQLPNAEIVPVSAQQGHNLEALEGLIAKHLPENDHFFPEDQITDRSSRFLAAELVREKIMRQLGAELPYQITVEIEEFKQQGKTLHIHALIIVERDGQKKIIIGDKGERIKRIGMEARKDMELLFDSKVMLNLWVKVKGGWSDDERALRSLGYGDL.

An Era-type G domain is found at 8–176 (RCGYVAIVGR…EGLIAKHLPE (169 aa)). The interval 16–23 (GRPNVGKS) is G1. A GTP-binding site is contributed by 16–23 (GRPNVGKS). The tract at residues 42-46 (QTTRH) is G2. The segment at 63–66 (DTPG) is G3. GTP is bound by residues 63–67 (DTPGM) and 125–128 (NKTD). Residues 125 to 128 (NKTD) form a G4 region. Positions 155–157 (VSA) are G5. Residues 199–283 (VREKIMRQLG…MLNLWVKVKG (85 aa)) form the KH type-2 domain.

It belongs to the TRAFAC class TrmE-Era-EngA-EngB-Septin-like GTPase superfamily. Era GTPase family. As to quaternary structure, monomer.

The protein resides in the cytoplasm. It localises to the cell inner membrane. In terms of biological role, an essential GTPase that binds both GDP and GTP, with rapid nucleotide exchange. Plays a role in 16S rRNA processing and 30S ribosomal subunit biogenesis and possibly also in cell cycle regulation and energy metabolism. The sequence is that of GTPase Era from Pseudomonas fluorescens (strain ATCC BAA-477 / NRRL B-23932 / Pf-5).